Reading from the N-terminus, the 485-residue chain is Alpha,alpha-trehalose-phosphate synthase [UDP-forming] (485 aa).

Y99 and D153 together coordinate D-glucose 6-phosphate. UDP contacts are provided by R290 and K295. 2 residues coordinate UDP-alpha-D-glucose: R290 and K295. Position 328 (R328) interacts with D-glucose 6-phosphate. UDP contacts are provided by residues I367 and 393–397 (LVSYE). Residues I367 and 389-397 (DGMNLVSYE) each bind UDP-alpha-D-glucose.

This sequence belongs to the glycosyltransferase 20 family.

It catalyses the reaction D-glucose 6-phosphate + UDP-alpha-D-glucose = alpha,alpha-trehalose 6-phosphate + UDP + H(+). It functions in the pathway carbohydrate biosynthesis. Synthase catalytic subunit of the trehalose synthase complex that catalyzes the production of trehalose from glucose-6-phosphate and UDP-alpha-D-glucose in a two step process. The protein is Alpha,alpha-trehalose-phosphate synthase [UDP-forming] of Zygosaccharomyces rouxii.